The sequence spans 83 residues: Small ribosomal subunit protein eS21 (83 aa).

An N-acetylmethionine modification is found at Met-1. Lys-41 is covalently cross-linked (Glycyl lysine isopeptide (Lys-Gly) (interchain with G-Cter in SUMO2)).

The protein belongs to the eukaryotic ribosomal protein eS21 family. As to quaternary structure, component of the 40S small ribosomal subunit.

Its subcellular location is the cytoplasm. The protein localises to the cytosol. The protein resides in the rough endoplasmic reticulum. Its function is as follows. Component of the small ribosomal subunit. The ribosome is a large ribonucleoprotein complex responsible for the synthesis of proteins in the cell. The protein is Small ribosomal subunit protein eS21 (RPS21) of Oryctolagus cuniculus (Rabbit).